The sequence spans 306 residues: Lipoyl synthase (306 aa).

Cys55, Cys60, Cys66, Cys81, Cys85, Cys88, and Ser294 together coordinate [4Fe-4S] cluster. The Radical SAM core domain occupies 67-283 (WNHRTATFLL…RAYALARGFR (217 aa)).

The protein belongs to the radical SAM superfamily. Lipoyl synthase family. The cofactor is [4Fe-4S] cluster.

It localises to the cytoplasm. The catalysed reaction is [[Fe-S] cluster scaffold protein carrying a second [4Fe-4S](2+) cluster] + N(6)-octanoyl-L-lysyl-[protein] + 2 oxidized [2Fe-2S]-[ferredoxin] + 2 S-adenosyl-L-methionine + 4 H(+) = [[Fe-S] cluster scaffold protein] + N(6)-[(R)-dihydrolipoyl]-L-lysyl-[protein] + 4 Fe(3+) + 2 hydrogen sulfide + 2 5'-deoxyadenosine + 2 L-methionine + 2 reduced [2Fe-2S]-[ferredoxin]. Its pathway is protein modification; protein lipoylation via endogenous pathway; protein N(6)-(lipoyl)lysine from octanoyl-[acyl-carrier-protein]: step 2/2. Catalyzes the radical-mediated insertion of two sulfur atoms into the C-6 and C-8 positions of the octanoyl moiety bound to the lipoyl domains of lipoate-dependent enzymes, thereby converting the octanoylated domains into lipoylated derivatives. In Chloroflexus aggregans (strain MD-66 / DSM 9485), this protein is Lipoyl synthase.